Here is a 370-residue protein sequence, read N- to C-terminus: Glutamate 5-kinase (370 aa).

K11 contacts ATP. Substrate contacts are provided by S52, D139, and N151. ATP-binding positions include 171–172 (TD) and 213–219 (TGGMATK). The 79-residue stretch at 278-356 (TGKLLLDAGA…DQIVQILGYE (79 aa)) folds into the PUA domain.

The protein belongs to the glutamate 5-kinase family.

It is found in the cytoplasm. The enzyme catalyses L-glutamate + ATP = L-glutamyl 5-phosphate + ADP. It participates in amino-acid biosynthesis; L-proline biosynthesis; L-glutamate 5-semialdehyde from L-glutamate: step 1/2. In terms of biological role, catalyzes the transfer of a phosphate group to glutamate to form L-glutamate 5-phosphate. The polypeptide is Glutamate 5-kinase (Synechococcus sp. (strain ATCC 27144 / PCC 6301 / SAUG 1402/1) (Anacystis nidulans)).